Reading from the N-terminus, the 633-residue chain is DNA mismatch repair protein MutL (633 aa).

Belongs to the DNA mismatch repair MutL/HexB family.

This protein is involved in the repair of mismatches in DNA. It is required for dam-dependent methyl-directed DNA mismatch repair. May act as a 'molecular matchmaker', a protein that promotes the formation of a stable complex between two or more DNA-binding proteins in an ATP-dependent manner without itself being part of a final effector complex. In Bacillus pumilus (strain SAFR-032), this protein is DNA mismatch repair protein MutL.